The chain runs to 754 residues: Peptidyl-prolyl cis-trans isomerase G (754 aa).

One can recognise a PPIase cyclophilin-type domain in the interval 11 to 176 (FFDIAINNQP…AEVRILSCGE (166 aa)). Residues 182-193 (KVKKEEKKRHKS) are compositionally biased toward basic residues. Residues 182–754 (KVKKEEKKRH…SPGTDEDKSG (573 aa)) form a disordered region. Low complexity predominate over residues 194–216 (SSSSSSSSSDSDSSSDSQSSSDS). The segment covering 228–253 (KKRKKKHRKNSRKHKKEKKKRKKSKK) has biased composition (basic residues). A phosphoserine mark is found at Ser254, Ser256, Ser257, Ser259, and Ser290. Positions 292–310 (PKADEKERKNREREREREC) are enriched in basic and acidic residues. Phosphoserine is present on Ser315. The span at 329–347 (SGRKIKGRGPRRYRTPSRS) shows a compositional bias: basic residues. Composition is skewed to basic and acidic residues over residues 348 to 368 (RSRDRFRRSETPPHWRQEMQR) and 379 to 449 (RWIK…DKYK). Position 356 is a phosphoserine (Ser356). Phosphothreonine is present on Thr358. Ser386 is modified (phosphoserine). A Glycyl lysine isopeptide (Lys-Gly) (interchain with G-Cter in SUMO2) cross-link involves residue Lys392. Phosphoserine is present on residues Ser397, Ser413, and Ser415. Positions 450 to 462 (NKVKKRAKSKSRS) are enriched in basic residues. Basic and acidic residues-rich tracts occupy residues 463–553 (KSKE…DITK) and 578–599 (RTHDRDRSRSKEYHRYREQEYR). Positions 616–627 (SRSKDRRRRRRD) are enriched in basic residues. Basic and acidic residues predominate over residues 628–686 (SRSSEREESQSRNKDKYRNQESKSSHRKENSESEKRMYSKSRDHNSSNNSREKKADRDQ). Residues Ser687 and Ser690 each carry the phosphoserine modification. Polar residues predominate over residues 687 to 698 (SPFSKIKQSSQD). A Glycyl lysine isopeptide (Lys-Gly) (interchain with G-Cter in SUMO2) cross-link involves residue Lys693. Residues Ser696, Ser744, and Ser745 each carry the phosphoserine modification. A compositionally biased stretch (basic and acidic residues) spans 707-754 (KNKEDEKIRSSVEKENQKSKGQENDHVHEKNKKFDHESSPGTDEDKSG). Thr748 is subject to Phosphothreonine. Ser753 bears the Phosphoserine mark.

In terms of assembly, interacts with CLK1, PNN and with the phosphorylated C-terminal domain of RNA polymerase II. In terms of tissue distribution, ubiquitous.

Its subcellular location is the nucleus matrix. It localises to the nucleus speckle. The catalysed reaction is [protein]-peptidylproline (omega=180) = [protein]-peptidylproline (omega=0). With respect to regulation, inhibited by cyclosporin A (CsA). Its function is as follows. PPIase that catalyzes the cis-trans isomerization of proline imidic peptide bonds in oligopeptides and may therefore assist protein folding. May be implicated in the folding, transport, and assembly of proteins. May play an important role in the regulation of pre-mRNA splicing. The protein is Peptidyl-prolyl cis-trans isomerase G (PPIG) of Homo sapiens (Human).